The primary structure comprises 144 residues: Large ribosomal subunit protein uL16 (144 aa).

It belongs to the universal ribosomal protein uL16 family. Part of the 50S ribosomal subunit.

Functionally, binds 23S rRNA and is also seen to make contacts with the A and possibly P site tRNAs. In Thermoanaerobacter sp. (strain X514), this protein is Large ribosomal subunit protein uL16.